We begin with the raw amino-acid sequence, 524 residues long: GMP synthase [glutamine-hydrolyzing] (524 aa).

Positions 9 to 207 (RILILDFGSQ…VIHICQCIPN (199 aa)) constitute a Glutamine amidotransferase type-1 domain. Residue C86 is the Nucleophile of the active site. Catalysis depends on residues H181 and E183. The GMPS ATP-PPase domain occupies 208–399 (WTTKHIIEDS…LGLPADLIYR (192 aa)). Residue 235–241 (SGGVDSA) participates in ATP binding.

As to quaternary structure, homodimer.

The enzyme catalyses XMP + L-glutamine + ATP + H2O = GMP + L-glutamate + AMP + diphosphate + 2 H(+). It participates in purine metabolism; GMP biosynthesis; GMP from XMP (L-Gln route): step 1/1. Catalyzes the synthesis of GMP from XMP. The sequence is that of GMP synthase [glutamine-hydrolyzing] from Coxiella burnetii (strain CbuK_Q154) (Coxiella burnetii (strain Q154)).